A 301-amino-acid chain; its full sequence is MFGWHWLLEWQTPYEFHGHLIEKVFAEEKTPYQHVTLVEFTRFGKGLIIDGKVQSTLYDEHIYHELLVHPLLLSLPKPPKNVLILGGGEGATLREVLKYKSVEKAVMVDIDEKVIEFAKKYLYEWHQGAFEDKRTSLVITDGLKFINETKDKYDAIILDLTDPIKDSTSYMLYTKEFYEKLRGILNQGGGIVTQATSPSFSLEVYVTIYNTIKEVFKEASASYTYMASFDGLWGFVYGGVRPDLLSEDEVNSRIRERISGQLRFYDDYSHKISFSLPKNIKSEFKKITKVSTEKDPIYVPA.

In terms of domain architecture, PABS spans 4-240 (WHWLLEWQTP…GLWGFVYGGV (237 aa)). Position 33 (Q33) interacts with S-methyl-5'-thioadenosine. Spermidine is bound by residues H64 and E89. Residues D109 and 141-142 (DG) each bind S-methyl-5'-thioadenosine. The Proton acceptor role is filled by D159.

Belongs to the spermidine/spermine synthase family. As to quaternary structure, homodimer or homotetramer.

It localises to the cytoplasm. The enzyme catalyses S-adenosyl 3-(methylsulfanyl)propylamine + putrescine = S-methyl-5'-thioadenosine + spermidine + H(+). It functions in the pathway amine and polyamine biosynthesis; spermidine biosynthesis; spermidine from putrescine: step 1/1. Catalyzes the irreversible transfer of a propylamine group from the amino donor S-adenosylmethioninamine (decarboxy-AdoMet) to putrescine (1,4-diaminobutane) to yield spermidine. This chain is Polyamine aminopropyltransferase, found in Saccharolobus islandicus (strain L.S.2.15 / Lassen #1) (Sulfolobus islandicus).